We begin with the raw amino-acid sequence, 110 residues long: Small ribosomal subunit protein bS16 (110 aa).

Positions 84–110 are disordered; sequence KRTARNNPEKAVPRKERKAQAEAAAKS. A compositionally biased stretch (basic and acidic residues) spans 90-103; it reads NPEKAVPRKERKAQ.

It belongs to the bacterial ribosomal protein bS16 family.

The polypeptide is Small ribosomal subunit protein bS16 (Nitrobacter hamburgensis (strain DSM 10229 / NCIMB 13809 / X14)).